Reading from the N-terminus, the 297-residue chain is ATP synthase F(1) complex subunit gamma, mitochondrial (297 aa).

The transit peptide at 1–25 (MFSRAGVAGLSAWTLQPQWIQVRNM) directs the protein to the mitochondrion. At Lys39 the chain carries N6-acetyllysine. Residue Lys49 is modified to N6-succinyllysine. At Lys55 the chain carries N6-acetyllysine. Lys115 is modified (N6-acetyllysine; alternate). N6-succinyllysine; alternate is present on Lys115. Ser146 carries the phosphoserine modification. Lys154 is modified (N6-acetyllysine; alternate). N6-succinyllysine; alternate is present on Lys154. Position 197 is an N6-acetyllysine (Lys197). Lys270 carries the post-translational modification N6-succinyllysine.

Belongs to the ATPase gamma chain family. As to quaternary structure, component of the ATP synthase complex composed at least of ATP5F1A/subunit alpha, ATP5F1B/subunit beta, ATP5MC1/subunit c (homooctomer), MT-ATP6/subunit a, MT-ATP8/subunit 8, ATP5ME/subunit e, ATP5MF/subunit f, ATP5MG/subunit g, ATP5MK/subunit k, ATP5MJ/subunit j, ATP5F1C/subunit gamma, ATP5F1D/subunit delta, ATP5F1E/subunit epsilon, ATP5PF/subunit F6, ATP5PB/subunit b, ATP5PD/subunit d, ATP5PO/subunit OSCP. ATP synthase complex consists of a soluble F(1) head domain (subunits alpha(3) and beta(3)) - the catalytic core - and a membrane F(0) domain - the membrane proton channel (subunits c, a, 8, e, f, g, k and j). These two domains are linked by a central stalk (subunits gamma, delta, and epsilon) rotating inside the F1 region and a stationary peripheral stalk (subunits F6, b, d, and OSCP). Interacts with FLVCR2; this interaction occurs in the absence of heme and is disrupted upon heme binding.

It localises to the mitochondrion inner membrane. In terms of biological role, subunit gamma, of the mitochondrial membrane ATP synthase complex (F(1)F(0) ATP synthase or Complex V) that produces ATP from ADP in the presence of a proton gradient across the membrane which is generated by electron transport complexes of the respiratory chain. ATP synthase complex consist of a soluble F(1) head domain - the catalytic core - and a membrane F(1) domain - the membrane proton channel. These two domains are linked by a central stalk rotating inside the F(1) region and a stationary peripheral stalk. During catalysis, ATP synthesis in the catalytic domain of F(1) is coupled via a rotary mechanism of the central stalk subunits to proton translocation. In vivo, can only synthesize ATP although its ATP hydrolase activity can be activated artificially in vitro. With the central stalk subunit delta, is essential for the biogenesis of F(1) catalytic part of the ATP synthase complex namely in the formation of F1 assembly intermediate. The protein is ATP synthase F(1) complex subunit gamma, mitochondrial of Pongo abelii (Sumatran orangutan).